The primary structure comprises 181 residues: Succinate dehydrogenase [ubiquinone] cytochrome b small subunit, mitochondrial (181 aa).

Residues 1-31 constitute a mitochondrion transit peptide; the sequence is MMLPRSMKFMTGRRIFHTATVRAFQSTAKKS. At 32-66 the chain is on the mitochondrial matrix side; it reads LTIPFLPVLPQKPGGVRGTPNDAYVPPPENKLEGS. A helical transmembrane segment spans residues 67 to 88; sequence YHWYMEKIFALSVVPLATTAML. Residues 89 to 98 lie on the Mitochondrial intermembrane side of the membrane; the sequence is TTGPLSTAAD. The chain crosses the membrane as a helical span at residues 99 to 118; it reads SFFSVMLLGYCYMEFNSCIT. Position 109 (Cys-109) interacts with heme. The Mitochondrial matrix portion of the chain corresponds to 119 to 127; that stretch reads DYISERVYG. Tyr-120 contributes to the a ubiquinone binding site. A helical transmembrane segment spans residues 128–148; it reads VWHKYAMYMLGLGSAVSLFGI. The Mitochondrial intermembrane portion of the chain corresponds to 149-181; that stretch reads YKLETENDGVVGLVKSLWDSSEKDNSQKIEAKK.

Belongs to the CybS family. In terms of assembly, forms part of complex II containing four subunits: a flavoprotein (FP), an iron-sulfur protein (IP) and a cytochrome b composed of a large and a small subunit.

Its subcellular location is the mitochondrion inner membrane. The protein operates within carbohydrate metabolism; tricarboxylic acid cycle. Its function is as follows. Membrane-anchoring subunit of succinate dehydrogenase (SDH) that is involved in system II of the mitochondrial electron transport chain and is responsible for transferring electrons from succinate to ubiquinone (coenzyme Q). SDH3 and SDH4 form the membrane dimer that anchors the catalytic dimer formed by SDH1 and SDH2 to the matrix surface of the mitochondrial inner membrane. Electrons originating from the catalytic dimer enter the membrane dimer for ubiquinone reduction. This is Succinate dehydrogenase [ubiquinone] cytochrome b small subunit, mitochondrial (SDH4) from Saccharomyces cerevisiae (strain ATCC 204508 / S288c) (Baker's yeast).